A 508-amino-acid polypeptide reads, in one-letter code: Pancreatic alpha-amylase 2a5 (508 aa).

Positions 1–15 are cleaved as a signal peptide; sequence MKFVLLLSLIGFCWA. A Pyrrolidone carboxylic acid modification is found at Q16. Disulfide bonds link C43–C101, C85–C130, and C156–C172. The Ca(2+) site is built by N115, R170, and D179. Position 207 (R207) interacts with chloride. D209 functions as the Nucleophile in the catalytic mechanism. H213 contacts Ca(2+). E245 functions as the Proton donor in the catalytic mechanism. Chloride contacts are provided by N310 and R349. Cystine bridges form between C390-C396 and C462-C474.

The protein belongs to the glycosyl hydrolase 13 family. In terms of assembly, monomer. The cofactor is Ca(2+). It depends on chloride as a cofactor.

It is found in the secreted. The protein localises to the extracellular space. It catalyses the reaction Endohydrolysis of (1-&gt;4)-alpha-D-glucosidic linkages in polysaccharides containing three or more (1-&gt;4)-alpha-linked D-glucose units.. This chain is Pancreatic alpha-amylase 2a5, found in Mus musculus (Mouse).